A 272-amino-acid polypeptide reads, in one-letter code: Hydroxyacylglutathione hydrolase (272 aa).

Zn(2+)-binding residues include H62, H64, D66, H67, H126, D146, and H184.

The protein belongs to the metallo-beta-lactamase superfamily. Glyoxalase II family. Monomer. The cofactor is Zn(2+).

It carries out the reaction an S-(2-hydroxyacyl)glutathione + H2O = a 2-hydroxy carboxylate + glutathione + H(+). The protein operates within secondary metabolite metabolism; methylglyoxal degradation; (R)-lactate from methylglyoxal: step 2/2. In terms of biological role, thiolesterase that catalyzes the hydrolysis of S-D-lactoyl-glutathione to form glutathione and D-lactic acid. The protein is Hydroxyacylglutathione hydrolase of Saccharophagus degradans (strain 2-40 / ATCC 43961 / DSM 17024).